Here is a 410-residue protein sequence, read N- to C-terminus: Chaperone protein dnaJ 15 (410 aa).

In terms of domain architecture, J spans D17–G82. Residues A284–D344 are a coiled coil. The interval S351–G410 is disordered. The segment covering S357–S367 has biased composition (low complexity).

Belongs to the DnaJ family. B/II subfamily. Expressed at high levels in root cap, root tip meristematic region and elongation zones, and at lower levels in mature part of roots (at protein level). Constitutively expressed in seedlings, etiolated or not, roots, rosette leaves, cauline leaves, stems, flowers, siliques and pollen.

Its subcellular location is the cytoplasm. It localises to the cytoskeleton. The protein resides in the endoplasmic reticulum membrane. The protein localises to the golgi apparatus membrane. Its function is as follows. Plays a continuous role in plant development probably in the structural organization of compartments. Seems to be involved in early gravitropic signal transduction within the gravity-perceiving cells (statocytes), where it influences pH changes and auxin distribution. Probably affects the localization and/or activity of auxin efflux carrier components (PIN proteins) or other proteins involved in lateral auxin transport. This is Chaperone protein dnaJ 15 (ATJ15) from Arabidopsis thaliana (Mouse-ear cress).